The chain runs to 166 residues: Putative universal stress protein SA1532 (166 aa).

This sequence belongs to the universal stress protein A family.

The protein resides in the cytoplasm. This Staphylococcus aureus (strain N315) protein is Putative universal stress protein SA1532.